The primary structure comprises 343 residues: Calcium/calmodulin-dependent protein kinase type 1B (343 aa).

One can recognise a Protein kinase domain in the interval 15-270 (YEIREKLGSG…CQQALQHLWI (256 aa)). ATP contacts are provided by residues 21–29 (LGSGAFSEV) and Lys-44. Residue Asp-136 is the Proton acceptor of the active site. A calmodulin-binding region spans residues 290–311 (KNFARTHWKRAFNATSFLRHIR). Residues 314–343 (GQSPEGEEASRQCMTRHSHPGLGTSQSPKW) form a disordered region. Ser-338 carries the phosphoserine modification.

The protein belongs to the protein kinase superfamily. CAMK Ser/Thr protein kinase family. CaMK subfamily. Expressed at highest levels in adult brain, and expressed in embryo. In the adult brain detected at high levels in the anterior olfactory nuclei, piriform cortex, septal nuclei, bed nuclei of the stria terminalis, hippocampal pyramidal cells, dentate granule cells, amygdala, hypothalamic nuclei, parabrachial nucleus, and nucleus of the solitary tract. Expressed at lower levels in adult ovary and heart and at very low levels in testis, lung and muscle.

It is found in the cytoplasm. The protein localises to the nucleus. It carries out the reaction L-seryl-[protein] + ATP = O-phospho-L-seryl-[protein] + ADP + H(+). The catalysed reaction is L-threonyl-[protein] + ATP = O-phospho-L-threonyl-[protein] + ADP + H(+). Its activity is regulated as follows. Activated by Ca(2+)/calmodulin. Calcium/calmodulin-dependent protein kinase belonging to a proposed calcium-triggered signaling cascade. In vitro phosphorylates CREB1 and SYN1/synapsin I. Phosphorylates and activates CAMK1. This is Calcium/calmodulin-dependent protein kinase type 1B (Pnck) from Mus musculus (Mouse).